The sequence spans 183 residues: Putative manganese efflux pump MntP (183 aa).

Transmembrane regions (helical) follow at residues 3-23 (TISV…LSIY), 43-63 (TFGI…ILFI), 66-86 (ISLY…LMML), 107-127 (LIIM…TFSI), 134-154 (FLYT…GFIL), and 161-181 (ILGQ…SINI).

It belongs to the MntP (TC 9.B.29) family.

The protein resides in the cell inner membrane. Its function is as follows. Probably functions as a manganese efflux pump. The protein is Putative manganese efflux pump MntP of Fusobacterium nucleatum subsp. nucleatum (strain ATCC 25586 / DSM 15643 / BCRC 10681 / CIP 101130 / JCM 8532 / KCTC 2640 / LMG 13131 / VPI 4355).